Here is a 2167-residue protein sequence, read N- to C-terminus: SH3 and multiple ankyrin repeat domains protein 1 (2167 aa).

A disordered region spans residues 1 to 63 (MTHSPATSED…TRGLQGRSMS (63 aa)). Residues 17-32 (SECPEGGSESDSSPDG) show a composition bias toward low complexity. A compositionally biased stretch (gly residues) spans 33-47 (PGRGPQGTRGRGSGA). An Omega-N-methylarginine modification is found at arginine 43. Residue tyrosine 186 is modified to Phosphotyrosine. 6 ANK repeats span residues 212-242 (SGETPLTLAAQTEGSVEVIRTLCLGGAHIDF), 246-275 (DGMTALHKAACARHCLALTALLDLGGSPNY), 279-309 (RGLTPLFHTAMVGGDPRCCELLLYNRAQLGI), 313-342 (NGWQEIHQACQRGHSQHLEHLLFYGAEPGA), 346-375 (SGNTALHICALYNKETCARILLYRGANKDV), and 379-407 (NGQTPFQVAVIAGNFELGELIRNHREQDV). Disordered stretches follow at residues 413 to 432 (SPKYAARRRGPPGAGLTVPP) and 454 to 546 (PGAS…SRGR). Over residues 454 to 479 (PGASSSGTPGPTSGSQGQSQPSAPST) the composition is skewed to low complexity. A compositionally biased stretch (gly residues) spans 527–542 (PAGGTGGSGGPGGSLG). Serine 540 carries the phosphoserine modification. Position 544 is an omega-N-methylarginine (arginine 544). The SH3 domain maps to 554–613 (VPGRSFMAVKSYQAQGEGEISLSKGEKIKVLSIGEGGFWEGQVKGRVGWFPSDCLEEVAN). Residues 663–757 (TVLLQKKDSE…TLMVKVVMVT (95 aa)) enclose the PDZ domain. Phosphoserine is present on residues serine 671 and serine 791. Positions 841 to 894 (ISASESPGPGGLASLGKHRPKGFFATESSFDPHHRSQPSYDRPSFLPPGPGLML) are disordered. At serine 898 the chain carries Phosphoserine. 2 disordered regions span residues 917-1233 (SRSL…LDFT) and 1245-1290 (RREG…RHSK). Pro residues predominate over residues 928–947 (IPPPPTTSPPEPPYSTPPAP). Arginine 958 is modified (omega-N-methylarginine). The span at 969-980 (PLPASSPSSFDG) shows a compositional bias: low complexity. Over residues 1004–1028 (AHHHPPHHHHHHAPPPQPHHHHAHP) the composition is skewed to basic residues. An Omega-N-methylarginine modification is found at arginine 1059. A compositionally biased stretch (low complexity) spans 1064 to 1089 (SPTSGAPSPSHHSSSGGSSGPAQAPA). 2 positions are modified to omega-N-methylarginine: arginine 1098 and arginine 1109. Composition is skewed to low complexity over residues 1132 to 1146 (SLPPASSPTSPALPR) and 1171 to 1184 (STSSSGRSSQGSST). The segment covering 1203–1224 (SPAPATSPVPPSPSPVPTPASP) has biased composition (pro residues). A compositionally biased stretch (basic and acidic residues) spans 1245–1256 (RREGGWQNEARR). Position 1257 is an asymmetric dimethylarginine (arginine 1257). Serine 1291 carries the phosphoserine modification. Disordered stretches follow at residues 1308 to 1331 (GGSSGGYGAYAAGSRAYGGSGSSS), 1361 to 1417 (LAAR…VLRL), 1429 to 1458 (RAGLGSQEKALTASPPAARRSLLHRLPPTA), 1500 to 1725 (FLEN…AGVA), 1740 to 1790 (GQAF…TPTS), 1828 to 1866 (VPPVPLPTASSLPRKLLPWEEGPGPPPPPLPGPLSQPQA), 1898 to 1988 (PWAR…STRH), and 2002 to 2029 (RRAPSPSLLPASDHKVSPAPRPSSLPIL). Basic and acidic residues predominate over residues 1363 to 1372 (ARERALKESS). The segment covering 1378-1395 (PQPPPRPPSPRYDAPPPT) has biased composition (pro residues). Over residues 1396-1408 (LHHHSPHSPHSPH) the composition is skewed to basic residues. Arginine 1429 is subject to Omega-N-methylarginine. A Phosphoserine modification is found at serine 1442. Residues 1530–1541 (RRVLPTSPTSPR) are compositionally biased toward low complexity. Pro residues predominate over residues 1589 to 1615 (PLTPGPPHPLPDPPSPATPLPAAPPPA). The span at 1624-1641 (DSTASSLTSYDSEVATLT) shows a compositional bias: polar residues. The span at 1648 to 1676 (PGDPPAPGPPAPAAPAPPAPQPGPDPPPG) shows a compositional bias: pro residues. Residues 1684 to 1694 (VDSRSSSDHPL) show a composition bias toward basic and acidic residues. A compositionally biased stretch (low complexity) spans 1695 to 1708 (ETISSASTLSSLSA). Over residues 1709-1724 (EGGGNTGGVAGGGAGV) the composition is skewed to gly residues. Residues 1850–1861 (PGPPPPPLPGPL) show a composition bias toward pro residues. Arginine 1901 is modified (omega-N-methylarginine). Composition is skewed to low complexity over residues 1934–1945 (SQTSLLSKPSSS), 1960–1985 (TGSGVSSSTAAAPGATSPSASSASAS), and 2002–2012 (RRAPSPSLLPA). Omega-N-methylarginine occurs at positions 2022, 2042, and 2080. The SAM domain occupies 2104–2167 (WTKFDVADWL…DRALKFFLER (64 aa)).

The protein belongs to the SHANK family. As to quaternary structure, may homomultimerize via its SAM domain. Interacts with the C-terminus of SSTR2 via the PDZ domain. Interacts with SHARPIN, SPTAN1, HOMER1 and DLGAP1/GKAP. Part of a complex with DLG4/PSD-95 and DLGAP1/GKAP. Interacts with BAIAP2. Interacts with IGSF9. Interacts with HOMER1 and HOMER3. As to expression, in brain, highly expressed in cortex, hippocampus and cerebellum.

Its subcellular location is the cytoplasm. It localises to the synapse. It is found in the postsynaptic density. Seems to be an adapter protein in the postsynaptic density (PSD) of excitatory synapses that interconnects receptors of the postsynaptic membrane including NMDA-type and metabotropic glutamate receptors, and the actin-based cytoskeleton. Plays a role in the structural and functional organization of the dendritic spine and synaptic junction. Overexpression promotes maturation of dendritic spines and the enlargement of spine heads via its ability to recruit Homer to postsynaptic sites, and enhances presynaptic function. The polypeptide is SH3 and multiple ankyrin repeat domains protein 1 (Shank1) (Mus musculus (Mouse)).